We begin with the raw amino-acid sequence, 823 residues long: Apoptosis-resistant E3 ubiquitin protein ligase 1 (823 aa).

The stretch at 52–158 (GNYLDPRSCK…VAYSPYYKIF (107 aa)) is one Filamin repeat. A disordered region spans residues 315–345 (PPMHMTSSQRRPSTAVDEEDEDSPSECHTPE). The segment at 483–789 (SISDWSKNFE…THSTLPTAHT (307 aa)) is interaction with SOCS2. An HECT domain is found at 483-823 (SISDWSKNFE…SEGCEGFGML (341 aa)). Cys-790 functions as the Glycyl thioester intermediate in the catalytic mechanism.

In terms of assembly, interacts with SOCS2. Interacts (via HECT domain) with HTRA2, DIABLO/SMAC and SEPTIN4; in the cytoplasm following induction of apoptosis. Autoubiquitinated in vitro in the presence of E2 enzyme UBE2D1/UBCH5A.

The enzyme catalyses S-ubiquitinyl-[E2 ubiquitin-conjugating enzyme]-L-cysteine + [acceptor protein]-L-lysine = [E2 ubiquitin-conjugating enzyme]-L-cysteine + N(6)-ubiquitinyl-[acceptor protein]-L-lysine.. Its pathway is protein modification; protein ubiquitination. E3 ubiquitin-protein ligase that catalyzes 'Lys-11'- or 'Lys-33'-linked polyubiquitin chains, with some preference for 'Lys-33' linkages. E3 ubiquitin-protein ligases accept ubiquitin from an E2 ubiquitin-conjugating enzyme in the form of a thioester and then directly transfers the ubiquitin to targeted substrates. Ubiquitinates SEPTIN4, DIABLO/SMAC and HTRA2 in vitro. Modulates pulmonary inflammation by targeting SOCS2 for ubiquitination and subsequent degradation by the proteasome. The polypeptide is Apoptosis-resistant E3 ubiquitin protein ligase 1 (Homo sapiens (Human)).